Reading from the N-terminus, the 270-residue chain is Shikimate dehydrogenase (NADP(+)) (270 aa).

Shikimate is bound by residues 14 to 16 (SKS) and Thr-60. Lys-64 acts as the Proton acceptor in catalysis. NADP(+) is bound at residue Glu-76. Residues Asn-85 and Asp-101 each contribute to the shikimate site. NADP(+)-binding positions include 125 to 129 (GAGGA), 149 to 154 (NRTASR), and Met-213. Tyr-215 serves as a coordination point for shikimate. Gly-236 contacts NADP(+).

This sequence belongs to the shikimate dehydrogenase family. Homodimer.

The catalysed reaction is shikimate + NADP(+) = 3-dehydroshikimate + NADPH + H(+). Its pathway is metabolic intermediate biosynthesis; chorismate biosynthesis; chorismate from D-erythrose 4-phosphate and phosphoenolpyruvate: step 4/7. In terms of biological role, involved in the biosynthesis of the chorismate, which leads to the biosynthesis of aromatic amino acids. Catalyzes the reversible NADPH linked reduction of 3-dehydroshikimate (DHSA) to yield shikimate (SA). This chain is Shikimate dehydrogenase (NADP(+)), found in Stutzerimonas stutzeri (strain A1501) (Pseudomonas stutzeri).